Here is a 405-residue protein sequence, read N- to C-terminus: Phosphoglycerate kinase (405 aa).

Substrate contacts are provided by residues 23–25 (DFN), R39, 62–65 (HLGR), R121, and R154. ATP contacts are provided by residues K207, G298, E329, and 355 to 358 (GGDT).

Belongs to the phosphoglycerate kinase family. As to quaternary structure, monomer.

Its subcellular location is the cytoplasm. The enzyme catalyses (2R)-3-phosphoglycerate + ATP = (2R)-3-phospho-glyceroyl phosphate + ADP. The protein operates within carbohydrate degradation; glycolysis; pyruvate from D-glyceraldehyde 3-phosphate: step 2/5. This Campylobacter hominis (strain ATCC BAA-381 / DSM 21671 / CCUG 45161 / LMG 19568 / NCTC 13146 / CH001A) protein is Phosphoglycerate kinase.